The following is a 408-amino-acid chain: PCI domain-containing protein 2 (408 aa).

Position 2 is an N-acetylalanine (Ala2). A Phosphoserine modification is found at Ser45. Positions 210–400 (VTYRYYVGRK…QKLVVSKQNP (191 aa)) constitute a PCI domain.

This sequence belongs to the CSN12 family. Component of the nuclear pore complex (NPC)-associated TREX-2 complex (transcription and export complex 2), composed of at least GANP, 2 copies of ENY2, PCID2, SEM1/DSS1, and either centrin CETN2 or centrin CETN3. The TREX-2 complex also associates with ALYREF/ALY and with the nucleoporin NUP153. Interacts with BRCA2. Interacts with SRCAP chromatin remodeling complex component ZNHIT1; the interaction results in inhibition of SRCAP complex activity, preventing the deposition of histone variant H2AZ1/H2A.Z to lymphoid fate regulator genes and restricting lymphoid lineage commitment.

It localises to the cytoplasm. The protein localises to the nucleus. The protein resides in the nuclear pore complex. Its function is as follows. Required for B-cell survival through the regulation of the expression of cell-cycle checkpoint MAD2L1 protein during B cell differentiation. As a component of the TREX-2 complex, involved in the export of mRNAs to the cytoplasm through the nuclear pores. Binds and stabilizes BRCA2 and is thus involved in the control of R-loop-associated DNA damage and transcription-associated genomic instability. Blocks the activity of the SRCAP chromatin remodeling complex by interacting with SRCAP complex member ZNHIT1 and inhibiting its interaction with the complex. This prevents the deposition of histone variant H2AZ1/H2A.Z at the nucleosomes of key lymphoid fate regulator genes which suppresses their expression and restricts lymphoid lineage commitment. The chain is PCI domain-containing protein 2 (PCID2) from Bos taurus (Bovine).